Reading from the N-terminus, the 331-residue chain is MIKRNLPLMITIGVFVLGYLYCLTQFPGFASTRVICNILTDNAFLGIIAVGMTFVILSGGIDLSVGSVIAFTGVFLAKVIGDFGLSPLLAFPLVLVMGCAFGAFMGLLIDALKIPAFIITLAGMFFLRGVSYLVSEESIPINHPIYDTLSSLAWKIPGGGRLSAMGLLMLAVVVIGIFLAHRTRFGNQVYAIGGNATSANLMGISTRSTTIRIYMLSTGLATLAGIVFSIYTQAGYALAGVGVELDAIASVVIGGTLLSGGVGTVLGTLFGVAIQGLIQTYINFDGTLSSWWTKIAIGILLFIFIALQRGLTVLWENRQSSPVTRVNIAQQ.

At 1 to 5 (MIKRN) the chain is on the cytoplasmic side. A helical membrane pass occupies residues 6–26 (LPLMITIGVFVLGYLYCLTQF). The Periplasmic portion of the chain corresponds to 27-42 (PGFASTRVICNILTDN). A helical transmembrane segment spans residues 43 to 63 (AFLGIIAVGMTFVILSGGIDL). Residues 64 to 88 (SVGSVIAFTGVFLAKVIGDFGLSPL) are Cytoplasmic-facing. Residues 89-109 (LAFPLVLVMGCAFGAFMGLLI) traverse the membrane as a helical segment. Over 110–113 (DALK) the chain is Periplasmic. A helical transmembrane segment spans residues 114–134 (IPAFIITLAGMFFLRGVSYLV). The Cytoplasmic segment spans residues 135–159 (SEESIPINHPIYDTLSSLAWKIPGG). Residues 160–180 (GRLSAMGLLMLAVVVIGIFLA) traverse the membrane as a helical segment. Over 181–222 (HRTRFGNQVYAIGGNATSANLMGISTRSTTIRIYMLSTGLAT) the chain is Periplasmic. The helical transmembrane segment at 223-243 (LAGIVFSIYTQAGYALAGVGV) threads the bilayer. Topologically, residues 244 to 250 (ELDAIAS) are cytoplasmic. The chain crosses the membrane as a helical span at residues 251-271 (VVIGGTLLSGGVGTVLGTLFG). At 272 to 294 (VAIQGLIQTYINFDGTLSSWWTK) the chain is on the periplasmic side. Residues 295–315 (IAIGILLFIFIALQRGLTVLW) form a helical membrane-spanning segment. The Cytoplasmic segment spans residues 316–331 (ENRQSSPVTRVNIAQQ).

The protein belongs to the binding-protein-dependent transport system permease family. AraH/RbsC subfamily. In terms of assembly, the complex is composed of two ATP-binding proteins (YtfR), two transmembrane proteins (YtfT and YjfF) and a solute-binding protein (YtfQ).

It is found in the cell inner membrane. In terms of biological role, part of the ABC transporter complex YtfQRT-YjfF involved in galactofuranose transport. Probably responsible for the translocation of the substrate across the membrane. The chain is Inner membrane ABC transporter permease protein YjfF (yjfF) from Escherichia coli (strain K12).